The primary structure comprises 223 residues: Uracil-DNA glycosylase (223 aa).

Asp-64 (proton acceptor) is an active-site residue.

It belongs to the uracil-DNA glycosylase (UDG) superfamily. UNG family.

It is found in the cytoplasm. The enzyme catalyses Hydrolyzes single-stranded DNA or mismatched double-stranded DNA and polynucleotides, releasing free uracil.. Its function is as follows. Excises uracil residues from the DNA which can arise as a result of misincorporation of dUMP residues by DNA polymerase or due to deamination of cytosine. This chain is Uracil-DNA glycosylase, found in Desulfitobacterium hafniense (strain DSM 10664 / DCB-2).